We begin with the raw amino-acid sequence, 146 residues long: 3-hydroxyacyl-[acyl-carrier-protein] dehydratase FabZ (146 aa).

Residue histidine 49 is part of the active site.

The protein belongs to the thioester dehydratase family. FabZ subfamily.

The protein localises to the cytoplasm. It carries out the reaction a (3R)-hydroxyacyl-[ACP] = a (2E)-enoyl-[ACP] + H2O. Its function is as follows. Involved in unsaturated fatty acids biosynthesis. Catalyzes the dehydration of short chain beta-hydroxyacyl-ACPs and long chain saturated and unsaturated beta-hydroxyacyl-ACPs. This chain is 3-hydroxyacyl-[acyl-carrier-protein] dehydratase FabZ, found in Pseudomonas entomophila (strain L48).